A 210-amino-acid chain; its full sequence is Calcineurin B-like protein 4 (210 aa).

A lipid anchor (N-myristoyl glycine) is attached at Gly2. EF-hand domains follow at residues 31–66 (EVEALRELYNKMSYSIIKDGLIHKEEFQLALFRNSR), 67–102 (KANLFADRVFDLFDLKRNGVIEFGEFVRSLSVFHPK), 104–139 (PKSEKTAFAFKLYDLRGTGYIEKEELREMVLALLDE), and 148–183 (AVEAIVDNTFSQADSNGDGRIDPEEWEEFVKANPAS). The Ca(2+) site is built by Asp161, Asn163, Asp165, Arg167, and Glu172.

This sequence belongs to the calcineurin regulatory subunit family. As to quaternary structure, homodimer. Interacts with CIPK24. In terms of tissue distribution, expressed in leaves.

The protein localises to the cell membrane. In terms of biological role, acts as a calcium sensor involved in the regulatory pathway for the control of intracellular Na(+) and K(+) homeostasis and salt tolerance. Operates in synergy with CIPK24 to activate the plasma membrane Na(+)/H(+) antiporter SOS1. May function as positive regulator of salt stress responses. CBL proteins interact with CIPK serine-threonine protein kinases. Binding of a CBL protein to the regulatory NAF domain of a CIPK protein lead to the activation of the kinase in a calcium-dependent manner. This Oryza sativa subsp. japonica (Rice) protein is Calcineurin B-like protein 4 (CBL4).